Reading from the N-terminus, the 265-residue chain is Tetrapyrrole-binding protein, chloroplastic (265 aa).

A disordered region spans residues 1–24 (MATTNSLHHHHHSSPSYTHHRNNL). Residues 1–69 (MATTNSLHHH…TAVSAVSTTN (69 aa)) constitute a chloroplast transit peptide. Over residues 7 to 23 (LHHHHHSSPSYTHHRNN) the composition is skewed to basic residues.

As to quaternary structure, interacts with CHLH, the protoporphyrin IX-binding subunit of Mg-chelatase. Monomer or extremely compact dimer.

Its subcellular location is the plastid. The protein localises to the chloroplast membrane. Functionally, regulates chlorophyll synthesis and plastid-to-nucleus signal transduction by binding both the product and the substrate of Mg-chelatase, an enzyme that produces magnesium-protoporphyrin IX (Mg-Proto). Also activates Mg-chelatase. Neither binds abscisic acid (ABA) nor is involved in ABA signaling. This is Tetrapyrrole-binding protein, chloroplastic (GUN4) from Arabidopsis thaliana (Mouse-ear cress).